The following is a 331-amino-acid chain: Ketol-acid reductoisomerase (NADP(+)) (331 aa).

The region spanning 2-182 (ARMYYDADAN…GGTRGGILET (181 aa)) is the KARI N-terminal Rossmann domain. NADP(+) is bound by residues 25–28 (YGSQ), Ser51, Ser53, and 83–86 (DDVQ). His108 is an active-site residue. Position 134 (Gly134) interacts with NADP(+). Residues 183-328 (TFREETETDL…KDLRAMFSWL (146 aa)) form the KARI C-terminal knotted domain. Mg(2+) is bound by residues Asp191, Glu195, Glu227, and Glu231. Ser252 is a substrate binding site.

Belongs to the ketol-acid reductoisomerase family. Requires Mg(2+) as cofactor.

It carries out the reaction (2R)-2,3-dihydroxy-3-methylbutanoate + NADP(+) = (2S)-2-acetolactate + NADPH + H(+). The enzyme catalyses (2R,3R)-2,3-dihydroxy-3-methylpentanoate + NADP(+) = (S)-2-ethyl-2-hydroxy-3-oxobutanoate + NADPH + H(+). The protein operates within amino-acid biosynthesis; L-isoleucine biosynthesis; L-isoleucine from 2-oxobutanoate: step 2/4. Its pathway is amino-acid biosynthesis; L-valine biosynthesis; L-valine from pyruvate: step 2/4. In terms of biological role, involved in the biosynthesis of branched-chain amino acids (BCAA). Catalyzes an alkyl-migration followed by a ketol-acid reduction of (S)-2-acetolactate (S2AL) to yield (R)-2,3-dihydroxy-isovalerate. In the isomerase reaction, S2AL is rearranged via a Mg-dependent methyl migration to produce 3-hydroxy-3-methyl-2-ketobutyrate (HMKB). In the reductase reaction, this 2-ketoacid undergoes a metal-dependent reduction by NADPH to yield (R)-2,3-dihydroxy-isovalerate. This is Ketol-acid reductoisomerase (NADP(+)) from Picosynechococcus sp. (strain ATCC 27264 / PCC 7002 / PR-6) (Agmenellum quadruplicatum).